The primary structure comprises 353 residues: D-alanine--D-alanine ligase (353 aa).

The 210-residue stretch at Lys-135–Gln-344 folds into the ATP-grasp domain. An ATP-binding site is contributed by Glu-171–Glu-226. Mg(2+)-binding residues include Asp-297, Glu-311, and Asn-313.

It belongs to the D-alanine--D-alanine ligase family. Requires Mg(2+) as cofactor. Mn(2+) serves as cofactor.

The protein localises to the cytoplasm. It catalyses the reaction 2 D-alanine + ATP = D-alanyl-D-alanine + ADP + phosphate + H(+). The protein operates within cell wall biogenesis; peptidoglycan biosynthesis. In terms of biological role, cell wall formation. This chain is D-alanine--D-alanine ligase, found in Picosynechococcus sp. (strain ATCC 27264 / PCC 7002 / PR-6) (Agmenellum quadruplicatum).